Here is a 566-residue protein sequence, read N- to C-terminus: Oxygen-dependent choline dehydrogenase (566 aa).

7 to 36 (DYIICGAGSAGNVLATRLTEDPDVTVLLLE) contributes to the FAD binding site. Residues 180 to 202 (NGYQQEGFGPMDRTVTPKGRRAS) form a disordered region. The Proton acceptor role is filled by H474.

This sequence belongs to the GMC oxidoreductase family. Requires FAD as cofactor.

The catalysed reaction is choline + A = betaine aldehyde + AH2. It carries out the reaction betaine aldehyde + NAD(+) + H2O = glycine betaine + NADH + 2 H(+). The protein operates within amine and polyamine biosynthesis; betaine biosynthesis via choline pathway; betaine aldehyde from choline (cytochrome c reductase route): step 1/1. Functionally, involved in the biosynthesis of the osmoprotectant glycine betaine. Catalyzes the oxidation of choline to betaine aldehyde and betaine aldehyde to glycine betaine at the same rate. This Burkholderia cenocepacia (strain HI2424) protein is Oxygen-dependent choline dehydrogenase.